Here is a 98-residue protein sequence, read N- to C-terminus: MALTKAEMAEHLFETLGINKRVAKEMVETFFEEIRQALESGEQVKLSGFGNFDLRDKNQRPGRNPKTGEDIPISARRVVTFRPGQKLKSRVEEANAKK.

The interval F49–I71 is disordered.

Belongs to the bacterial histone-like protein family. Heterodimer of an alpha and a beta chain.

Its function is as follows. This protein is one of the two subunits of integration host factor, a specific DNA-binding protein that functions in genetic recombination as well as in transcriptional and translational control. The polypeptide is Integration host factor subunit alpha (Shewanella halifaxensis (strain HAW-EB4)).